The sequence spans 412 residues: Aspartokinase (412 aa).

2 consecutive ACT domains span residues 266–340 (LTIR…GDTN) and 346–412 (IVGV…RQGE).

The protein belongs to the aspartokinase family.

It carries out the reaction L-aspartate + ATP = 4-phospho-L-aspartate + ADP. It participates in amino-acid biosynthesis; L-lysine biosynthesis via DAP pathway; (S)-tetrahydrodipicolinate from L-aspartate: step 1/4. The protein operates within amino-acid biosynthesis; L-methionine biosynthesis via de novo pathway; L-homoserine from L-aspartate: step 1/3. Its pathway is amino-acid biosynthesis; L-threonine biosynthesis; L-threonine from L-aspartate: step 1/5. The chain is Aspartokinase (lysC) from Pseudomonas aeruginosa (strain ATCC 15692 / DSM 22644 / CIP 104116 / JCM 14847 / LMG 12228 / 1C / PRS 101 / PAO1).